A 964-amino-acid polypeptide reads, in one-letter code: Translation initiation factor IF-2 (964 aa).

Residues 1-10 (MSDKTNDDKT) are compositionally biased toward basic and acidic residues. Positions 1–379 (MSDKTNDDKT…SQMQETREKI (379 aa)) are disordered. Residues 27–37 (EQSTVRQNFSH) show a composition bias toward polar residues. Over residues 77 to 102 (APAASTPAPAQAAQPAQAAPVVRAPA) the composition is skewed to low complexity. Positions 103–113 (PATPAPKPAAP) are enriched in pro residues. Low complexity predominate over residues 114 to 140 (AAPVTKPHVAQQRPAQQRPGGQQAQRP). Composition is skewed to basic and acidic residues over residues 156-227 (SEMD…EAAK) and 234-243 (ARTERRDDAR). Residues 250-278 (RPQQAGRPQGNRPPQGGRPQQGGPRPAAP) show a composition bias toward low complexity. A compositionally biased stretch (basic and acidic residues) spans 323 to 338 (PEVRAPKVVKTEDDRR). One can recognise a tr-type G domain in the interval 462 to 629 (SRPPVVTIMG…AILLQAEILD (168 aa)). The interval 471-478 (GHVDHGKT) is G1. 471–478 (GHVDHGKT) contributes to the GTP binding site. The interval 496–500 (GITQH) is G2. The segment at 517 to 520 (DTPG) is G3. GTP is bound by residues 517–521 (DTPGH) and 571–574 (NKID). The segment at 571 to 574 (NKID) is G4. Residues 607–609 (SAK) are G5.

It belongs to the TRAFAC class translation factor GTPase superfamily. Classic translation factor GTPase family. IF-2 subfamily.

It is found in the cytoplasm. Its function is as follows. One of the essential components for the initiation of protein synthesis. Protects formylmethionyl-tRNA from spontaneous hydrolysis and promotes its binding to the 30S ribosomal subunits. Also involved in the hydrolysis of GTP during the formation of the 70S ribosomal complex. The protein is Translation initiation factor IF-2 of Brucella anthropi (strain ATCC 49188 / DSM 6882 / CCUG 24695 / JCM 21032 / LMG 3331 / NBRC 15819 / NCTC 12168 / Alc 37) (Ochrobactrum anthropi).